The primary structure comprises 351 residues: Probable dual-specificity RNA methyltransferase RlmN (351 aa).

E92 serves as the catalytic Proton acceptor. One can recognise a Radical SAM core domain in the interval 98–334 (SGDRLTVCVS…VRWSKGLGAD (237 aa)). The cysteines at positions 105 and 337 are disulfide-linked. Residues C112, C116, and C119 each coordinate [4Fe-4S] cluster. Residues 159–160 (GE), S189, 218–220 (SLH), and N294 each bind S-adenosyl-L-methionine. Catalysis depends on C337, which acts as the S-methylcysteine intermediate.

The protein belongs to the radical SAM superfamily. RlmN family. Requires [4Fe-4S] cluster as cofactor.

The protein localises to the cytoplasm. The enzyme catalyses adenosine(2503) in 23S rRNA + 2 reduced [2Fe-2S]-[ferredoxin] + 2 S-adenosyl-L-methionine = 2-methyladenosine(2503) in 23S rRNA + 5'-deoxyadenosine + L-methionine + 2 oxidized [2Fe-2S]-[ferredoxin] + S-adenosyl-L-homocysteine. The catalysed reaction is adenosine(37) in tRNA + 2 reduced [2Fe-2S]-[ferredoxin] + 2 S-adenosyl-L-methionine = 2-methyladenosine(37) in tRNA + 5'-deoxyadenosine + L-methionine + 2 oxidized [2Fe-2S]-[ferredoxin] + S-adenosyl-L-homocysteine. Functionally, specifically methylates position 2 of adenine 2503 in 23S rRNA and position 2 of adenine 37 in tRNAs. The protein is Probable dual-specificity RNA methyltransferase RlmN of Synechococcus sp. (strain ATCC 27144 / PCC 6301 / SAUG 1402/1) (Anacystis nidulans).